Consider the following 255-residue polypeptide: Small ribosomal subunit protein uS2 (255 aa).

It belongs to the universal ribosomal protein uS2 family.

The polypeptide is Small ribosomal subunit protein uS2 (rpsB) (Streptococcus pyogenes serotype M1).